The sequence spans 371 residues: Glutamate 5-kinase (371 aa).

Residue K11 participates in ATP binding. Substrate contacts are provided by S52, D139, and N151. ATP-binding positions include 171–172 and 213–219; these read TD and TGGMATK. Residues 278 to 356 form the PUA domain; sequence EGSLTLDEGA…AEIPRILGYE (79 aa).

It belongs to the glutamate 5-kinase family.

Its subcellular location is the cytoplasm. It carries out the reaction L-glutamate + ATP = L-glutamyl 5-phosphate + ADP. Its pathway is amino-acid biosynthesis; L-proline biosynthesis; L-glutamate 5-semialdehyde from L-glutamate: step 1/2. In terms of biological role, catalyzes the transfer of a phosphate group to glutamate to form L-glutamate 5-phosphate. In Synechococcus sp. (strain JA-2-3B'a(2-13)) (Cyanobacteria bacterium Yellowstone B-Prime), this protein is Glutamate 5-kinase.